Reading from the N-terminus, the 188-residue chain is Glutamyl endopeptidase 2 (188 aa).

A disulfide bond links Cys-14 and Cys-34. Active-site charge relay system residues include His-33, Asp-62, and Ser-143. Cysteines 137 and 163 form a disulfide.

This sequence belongs to the peptidase S1 family. Monomer.

The enzyme catalyses Preferential cleavage: -Glu-|-Xaa- &gt;&gt; -Asp-|-Xaa-. Preference for Pro or Leu at P2 and Phe at P3. Cleavage of -Glu-|-Asp- and -Glu-|-Pro- bonds is slow.. Functionally, preferentially cleaves peptide bonds on the carboxyl-terminal side of glutamate. The chain is Glutamyl endopeptidase 2 (sprE) from Streptomyces griseus.